The chain runs to 109 residues: Ribonuclease (109 aa).

The active-site Proton acceptor is the Glu72. Residue His101 is the Proton donor of the active site.

Belongs to the ribonuclease N1/T1 family.

It localises to the secreted. Functionally, hydrolyzes phosphodiester bonds in RNA, poly- and oligoribonucleotides resulting in 3'-nucleoside monophosphates via 2',3'-cyclophosphate intermediates. This chain is Ribonuclease, found in Heyndrickxia coagulans (Weizmannia coagulans).